The chain runs to 1491 residues: Terminal uridylyltransferase 7 (1491 aa).

The residue at position 64 (threonine 64) is a Phosphothreonine. Phosphoserine occurs at positions 132 and 172. The segment at 165–203 (MSEMEAGSPENKKQRSRPRKPRRTRTEDSEQDGDLDGPV) is disordered. The segment covering 178 to 187 (QRSRPRKPRR) has biased composition (basic residues). The segment at 244-274 (YTCKLCDALIDSIPFAHKHIKEKRHKKNLKE) adopts a Matrin-type zinc-finger fold. The 50-residue stretch at 551-600 (VGQLWVELLRFYALEFNLADLVISIRVKELISRESKDWPKKRIAIEDPYS) folds into the PAP-associated 1 domain. Serine 600 and serine 747 each carry phosphoserine. Disordered stretches follow at residues 740-774 (AELP…KHPE) and 834-911 (QSRT…CGEN). The segment covering 844 to 857 (DDEEEEEEEEEEEE) has biased composition (acidic residues). Residue threonine 865 is modified to Phosphothreonine. Residues 885 to 897 (GEEDALSEEDDLA) are compositionally biased toward acidic residues. Serine 891 carries the post-translational modification Phosphoserine. The segment at 947 to 1491 (RKLTFTKGKS…ASVKRTQQES (545 aa)) is sufficient for monouridylation activity. A CCHC-type 1 zinc finger spans residues 959-976 (VVCSLCKREGHLKKDCPE). UTP contacts are provided by residues 1043–1046 (SSKN), 1053–1056 (SDLD), asparagine 1126, lysine 1148, 1166–1170 (SYAYT), and histidine 1282. Aspartate 1054 and aspartate 1056 together coordinate Mg(2+). The 53-residue stretch at 1230 to 1282 (VGQLWLGLLRFYTEEFDFKEHVISIRRKSLLTTFKKQWTSKYIVIEDPFDLNH) folds into the PAP-associated 2 domain. The segment at 1341 to 1358 (RCCRICGKIGHFMKDCPM) adopts a CCHC-type 2 zinc-finger fold. Disordered regions lie at residues 1362-1399 (VRRR…EKEV) and 1463-1491 (PQFK…QQES). The span at 1377 to 1399 (SESKEKRSKEDKEIQNKYTEKEV) shows a compositional bias: basic and acidic residues. The CCHC-type 3 zinc finger occupies 1447 to 1464 (KRCFICGREGHIKKECPQ). The span at 1470–1481 (GSLSSKYMTQGR) shows a compositional bias: polar residues.

It belongs to the DNA polymerase type-B-like family. Requires Mg(2+) as cofactor. It depends on Mn(2+) as a cofactor.

Its subcellular location is the cytoplasm. It catalyses the reaction RNA(n) + UTP = RNA(n)-3'-uridine ribonucleotide + diphosphate. Uridylyltransferase that mediates the terminal uridylation of mRNAs with short (less than 25 nucleotides) poly(A) tails, hence facilitating global mRNA decay. Essential for both oocyte maturation and fertility. Through 3' terminal uridylation of mRNA, sculpts, with TUT7, the maternal transcriptome by eliminating transcripts during oocyte growth. Involved in microRNA (miRNA)-induced gene silencing through uridylation of deadenylated miRNA targets. Also acts as a suppressor of miRNA biogenesis by mediating the terminal uridylation of miRNA precursors, including that of let-7 (pre-let-7). Uridylated pre-let-7 RNA is not processed by Dicer and undergo degradation. Pre-let-7 uridylation is strongly enhanced in the presence of LIN28A. Due to functional redundancy between ZCCHC6 and ZCCHC11, the identification of the specific role of each of these proteins is difficult. Involved in microRNA (miRNA)-induced gene silencing through uridylation of deadenylated miRNA targets. Also functions as an integral regulator of microRNA biogenesiS using 3 different uridylation mechanisms. Acts as a suppressor of miRNA biogenesis by mediating the terminal uridylation of some miRNA precursors, including that of let-7 (pre-let-7). Uridylated pre-let-7 RNA is not processed by Dicer and undergo degradation. Pre-let-7 oligouridylation is strongly enhanced in the presence of LIN28A. In the absence of LIN28A, TUT7 and TUT4 monouridylate group II pre-miRNAs, which includes most of pre-let7 members, that shapes an optimal 3' end overhang for efficient processing. Add oligo-U tails to truncated pre-miRNAS with a 5' overhang which may promote rapid degradation of non-functional pre-miRNA species. Does not play a role in replication-dependent histone mRNA degradation. Due to functional redundancy between TUT4 and TUT7, the identification of the specific role of each of these proteins is difficult. TUT4 and TUT7 restrict retrotransposition of long interspersed element-1 (LINE-1) in cooperation with MOV10 counteracting the RNA chaperonne activity of L1RE1. TUT7 uridylates LINE-1 mRNAs in the cytoplasm which inhibits initiation of reverse transcription once in the nucleus, whereas uridylation by TUT4 destabilizes mRNAs in cytoplasmic ribonucleoprotein granules. In Mus musculus (Mouse), this protein is Terminal uridylyltransferase 7.